The chain runs to 338 residues: Lipoate-protein ligase A (338 aa).

One can recognise a BPL/LPL catalytic domain in the interval 29 to 216 (PATQRVLFLW…AFFAHYGERV (188 aa)). Residues R71, 76–79 (GAVF), and K134 each bind ATP. K134 is a binding site for (R)-lipoate.

This sequence belongs to the LplA family. As to quaternary structure, monomer.

It localises to the cytoplasm. It carries out the reaction L-lysyl-[lipoyl-carrier protein] + (R)-lipoate + ATP = N(6)-[(R)-lipoyl]-L-lysyl-[lipoyl-carrier protein] + AMP + diphosphate + H(+). The protein operates within protein modification; protein lipoylation via exogenous pathway; protein N(6)-(lipoyl)lysine from lipoate: step 1/2. It functions in the pathway protein modification; protein lipoylation via exogenous pathway; protein N(6)-(lipoyl)lysine from lipoate: step 2/2. Catalyzes both the ATP-dependent activation of exogenously supplied lipoate to lipoyl-AMP and the transfer of the activated lipoyl onto the lipoyl domains of lipoate-dependent enzymes. The chain is Lipoate-protein ligase A from Escherichia coli (strain 55989 / EAEC).